The sequence spans 301 residues: Quinolinate synthase (301 aa).

Iminosuccinate-binding residues include histidine 21 and serine 38. Residue cysteine 83 coordinates [4Fe-4S] cluster. Iminosuccinate-binding positions include tyrosine 109–asparagine 111 and serine 126. Cysteine 169 lines the [4Fe-4S] cluster pocket. Iminosuccinate is bound by residues histidine 195–glutamate 197 and threonine 212. Position 257 (cysteine 257) interacts with [4Fe-4S] cluster.

This sequence belongs to the quinolinate synthase family. Type 2 subfamily. Requires [4Fe-4S] cluster as cofactor.

It localises to the cytoplasm. The catalysed reaction is iminosuccinate + dihydroxyacetone phosphate = quinolinate + phosphate + 2 H2O + H(+). Its pathway is cofactor biosynthesis; NAD(+) biosynthesis; quinolinate from iminoaspartate: step 1/1. Functionally, catalyzes the condensation of iminoaspartate with dihydroxyacetone phosphate to form quinolinate. This chain is Quinolinate synthase, found in Clostridium perfringens (strain SM101 / Type A).